Consider the following 451-residue polypeptide: Chaperone SurA (451 aa).

The signal sequence occupies residues Met1–Ser26. PpiC domains follow at residues Asp179–Gly280 and Lys290–Gly388.

The protein localises to the periplasm. It catalyses the reaction [protein]-peptidylproline (omega=180) = [protein]-peptidylproline (omega=0). Functionally, chaperone involved in the correct folding and assembly of outer membrane proteins. Recognizes specific patterns of aromatic residues and the orientation of their side chains, which are found more frequently in integral outer membrane proteins. May act in both early periplasmic and late outer membrane-associated steps of protein maturation. In Hydrogenovibrio crunogenus (strain DSM 25203 / XCL-2) (Thiomicrospira crunogena), this protein is Chaperone SurA.